We begin with the raw amino-acid sequence, 279 residues long: Large ribosomal subunit protein uL2 (279 aa).

Disordered stretches follow at residues 29–59 and 224–279; these read PEKSLLRPLHKTGGRNNSGKITTRHKGGGHK and VAMN…KNKR. The segment covering 50–59 has biased composition (basic residues); that stretch reads TTRHKGGGHK. Residues 253-268 are compositionally biased toward basic and acidic residues; that stretch reads PEGRTRRPNKESDKLI. Residues 269-279 are compositionally biased toward basic residues; that stretch reads VRRRRTGKNKR.

Belongs to the universal ribosomal protein uL2 family. In terms of assembly, part of the 50S ribosomal subunit. Forms a bridge to the 30S subunit in the 70S ribosome.

Functionally, one of the primary rRNA binding proteins. Required for association of the 30S and 50S subunits to form the 70S ribosome, for tRNA binding and peptide bond formation. It has been suggested to have peptidyltransferase activity; this is somewhat controversial. Makes several contacts with the 16S rRNA in the 70S ribosome. The chain is Large ribosomal subunit protein uL2 from Paenarthrobacter aurescens (strain TC1).